The following is a 937-amino-acid chain: Aconitate hydratase A (937 aa).

Residues cysteine 439, cysteine 505, and cysteine 508 each contribute to the [4Fe-4S] cluster site. The segment at 898–921 is disordered; sequence KKESKSTQSTTSKGCGSADTSSET.

This sequence belongs to the aconitase/IPM isomerase family. As to quaternary structure, monomer. The cofactor is [4Fe-4S] cluster.

The catalysed reaction is citrate = D-threo-isocitrate. The enzyme catalyses (2S,3R)-3-hydroxybutane-1,2,3-tricarboxylate = 2-methyl-cis-aconitate + H2O. It functions in the pathway carbohydrate metabolism; tricarboxylic acid cycle; isocitrate from oxaloacetate: step 2/2. Its pathway is organic acid metabolism; propanoate degradation. In terms of biological role, involved in the catabolism of short chain fatty acids (SCFA) via the tricarboxylic acid (TCA)(acetyl degradation route) and probably the 2-methylcitrate cycle I (propionate degradation route). Catalyzes the reversible isomerization of citrate to isocitrate via cis-aconitate. Could catalyze the hydration of 2-methyl-cis-aconitate to yield (2R,3S)-2-methylisocitrate. The apo form of AcnA functions as a RNA-binding regulatory protein. This is Aconitate hydratase A (acn) from Francisella tularensis subsp. holarctica (strain LVS).